Reading from the N-terminus, the 85-residue chain is Beta-insect depressant toxin Lqh-dprIT3h (85 aa).

Residues 1–21 (MKLLLLLTISASMLIEGLVNA) form the signal peptide. The 61-residue stretch at 22 to 82 (DGYIRGGDGC…EWDYETDTCG (61 aa)) folds into the LCN-type CS-alpha/beta domain. Disulfide bonds link C31–C81, C35–C56, C42–C63, and C46–C65. The residue at position 82 (G82) is a Glycine amide.

It belongs to the long (4 C-C) scorpion toxin superfamily. Sodium channel inhibitor family. Beta subfamily. Expressed by the venom gland.

It localises to the secreted. Functionally, depressant insect beta-toxins cause a transient contraction paralysis followed by a slow flaccid paralysis. They bind voltage-independently at site-4 of sodium channels (Nav) and block action potentials, primarily by depolarizing the axonal membrane and suppressing the sodium current. This depressant toxin is active only on insects. It is found in a relatively small amount in the venom. This is Beta-insect depressant toxin Lqh-dprIT3h from Leiurus hebraeus (Hebrew deathstalker scorpion).